A 1775-amino-acid chain; its full sequence is Atrochrysone carboxylic acid synthase (1775 aa).

In terms of domain architecture, Starter acyltransferase (SAT) spans 35–262 (LRRLQALSKD…YAKWASLPIF (228 aa)). The Ketosynthase family 3 (KS3) domain occupies 400 to 833 (DSKIAIVGMS…GGNTTMLLEE (434 aa)). Active-site for beta-ketoacyl synthase activity residues include C573, H708, and H750. The Malonyl-CoA:ACP transacylase (MAT) domain occupies 934–1244 (FAFTGQGAFY…ENNWNTLADS (311 aa)). A product template (PT) domain region spans residues 1313–1631 (TSSIHQVLQE…RSLLPTFFSP (319 aa)). Residues 1317–1451 (HQVLQEDVTG…SAVVEYGDAN (135 aa)) are N-terminal hotdog fold. The PKS/mFAS DH domain occupies 1317-1626 (HQVLQEDVTG…FRRFPRSLLP (310 aa)). The active-site Proton acceptor; for dehydratase activity is the H1349. The interval 1480 to 1626 (AAVLPRNMAY…FRRFPRSLLP (147 aa)) is C-terminal hotdog fold. D1537 serves as the catalytic Proton donor; for dehydratase activity. Residues 1671 to 1697 (TAAPVPAPAPVPAKRAEPAPAAAQAAA) are disordered. Low complexity predominate over residues 1688–1697 (PAPAAAQAAA). The 78-residue stretch at 1697-1774 (ATQNPTITGA…ELKTYIEETF (78 aa)) folds into the Carrier domain. O-(pantetheine 4'-phosphoryl)serine is present on S1734.

It catalyses the reaction holo-[ACP] + 8 malonyl-CoA + 8 H(+) = atrochrysone carboxyl-[ACP] + 8 CO2 + 8 CoA + 2 H2O. The protein operates within secondary metabolite biosynthesis. In terms of biological role, non-reducing polyketide synthase; part of the gene cluster that mediates the biosynthesis of physcion, a natural anthraquinone fungicide that can prevent plant fungal infections. The pathway begins with the polyketide synthase AcPKS that condenses 8 malonyl-CoA units to synthesize atrochrysone thioester which is released from the synthase by the atrochrysone carboxyl ACP thioesterase AcTE that breaks the thioester bond and leads to free atrochrysone carboxylic acid. Spontaneous decarboxylation of atrochrysone carboxylic acid leads to the formation of atrochrysone. Then, atrochrysone undergoes spontaneous dehydration and oxidation, giving the products emodin anthrone and emodin. The O-methyltransferase AcOMT then methylates the C-6 hydroxyl of emodin to form physcion. This chain is Atrochrysone carboxylic acid synthase, found in Aspergillus chevalieri (Eurotium chevalieri).